Reading from the N-terminus, the 409-residue chain is Potassium channel subfamily K member 3 (409 aa).

Residues 1 to 8 (MKRQNVRT) lie on the Cytoplasmic side of the membrane. Residues 9-29 (LALIVCTFTYLLVGAAVFDAL) traverse the membrane as a helical segment. Residue asparagine 53 is glycosylated (N-linked (GlcNAc...) asparagine). An intramembrane region (pore-forming) is located at residues 78–101 (WRFAGSFYFAITVITTIGYGHAAP). A helical transmembrane segment spans residues 108 to 128 (VFCMFYALLGIPLTLVMFQSL). The Cytoplasmic portion of the chain corresponds to 129-158 (GERINTFVRYLLHRAKRGLGMRHAEVSMAN). The helical transmembrane segment at 159–179 (MVLIGFVSCISTLCIGAAAFS) threads the bilayer. The segment at residues 184–207 (WTFFQAYYYCFITLTTIGFGDYVA) is an intramembrane region (pore-forming). A helical membrane pass occupies residues 223–243 (FSFVYILTGLTVIGAFLNLVV). At 244 to 409 (LRFMTMNAED…RGLMKRRSSV (166 aa)) the chain is on the cytoplasmic side.

Belongs to the two pore domain potassium channel (TC 1.A.1.8) family. As to quaternary structure, homodimer. Heterodimer with KCNK1. Heterodimer with KCNK9. Very strong expression in heart, also detected in kidney, brain, skin, testis, lung, skeletal muscle, small intestine and stomach. Not detected in liver, thymus or spleen. Expressed in adrenal glands mainly in zona glomerulosa and zona fasciculata of the cortex. Expressed at higher levels in brown and beige than in white adipocytes.

It is found in the cell membrane. The catalysed reaction is K(+)(in) = K(+)(out). It catalyses the reaction Na(+)(in) = Na(+)(out). Its activity is regulated as follows. Activated by halothane and isoflurane. Inhibited by external acidification, diacylglycerol and anandamide. Inactivated by barium. K(+) channel that conducts voltage-dependent outward rectifying currents upon membrane depolarization. Voltage sensing is coupled to K(+) electrochemical gradient in an 'ion flux gating' mode where outward but not inward ion flow opens the gate. Changes ion selectivity and becomes permeable to Na(+) ions in response to extracellular acidification. Protonation of the pH sensor His-98 stabilizes C-type inactivation conformation likely converting the channel from outward K(+)-conducting, to inward Na(+)-conducting to nonconductive state. Homo- and heterodimerizes to form functional channels with distinct regulatory and gating properties. Allows K(+) currents with fast-gating kinetics important for the repolarization and hyperpolarization phases of action potentials. In cerebellar granule cells, heteromeric KCNK3:KCNK9 channel may hyperpolarize the resting membrane potential to limit intrinsic neuronal excitability, but once the action potential threshold is reached, it may support high-frequency action potential firing and increased neuronal excitability. Dispensable for central chemosensory respiration i.e. breathing controlled by brainstem CO2/pH, it rather conducts pH-sensitive currents and controls the firing rate of serotonergic raphe neurons involved in potentiation of the respiratory chemoreflex. Additionally, imparts chemosensitivity to type 1 cells in carotid bodies which respond to a decrease in arterial oxygen pressure or an increase in carbon dioxide pressure or pH to initiate adaptive changes in pulmonary ventilation. In adrenal gland, contributes to the maintenance of a hyperpolarized resting membrane potential of aldosterone-producing cells at zona glomerulosa and limits aldosterone release as part of a regulatory mechanism that controls arterial blood pressure and electrolyte homeostasis. In brown adipocytes, mediates K(+) efflux that counteracts norepinephrine-induced membrane depolarization, limits Ca(2+) efflux and downstream cAMP and PKA signaling, ultimately attenuating lipid oxidation and adaptive thermogenesis. The protein is Potassium channel subfamily K member 3 of Mus musculus (Mouse).